We begin with the raw amino-acid sequence, 170 residues long: Phosphopantetheine adenylyltransferase (170 aa).

Threonine 18 provides a ligand contact to substrate. Residues 18–19 (TF) and histidine 26 contribute to the ATP site. The substrate site is built by lysine 50, leucine 84, and arginine 98. ATP is bound by residues 99 to 101 (GLR), glutamate 109, and 134 to 140 (WIYISSS).

This sequence belongs to the bacterial CoaD family. Homohexamer. Mg(2+) is required as a cofactor.

The protein localises to the cytoplasm. It carries out the reaction (R)-4'-phosphopantetheine + ATP + H(+) = 3'-dephospho-CoA + diphosphate. The protein operates within cofactor biosynthesis; coenzyme A biosynthesis; CoA from (R)-pantothenate: step 4/5. Reversibly transfers an adenylyl group from ATP to 4'-phosphopantetheine, yielding dephospho-CoA (dPCoA) and pyrophosphate. The protein is Phosphopantetheine adenylyltransferase of Desulfotalea psychrophila (strain LSv54 / DSM 12343).